The following is a 544-amino-acid chain: MAKRIIYNENARRALEKGMDILAESVAVTLGPKGRNVVLEKKFGAPQIVNDGVTIAKEIELEDHVENTGVSLIRQAASKTNDAAGDGTTTATVLAHAMVKEGLRNVAAGANPIALKRGIDKAAGFLVEKIAEHARQIEDSKAIAQVGAISAGNDEEVGKMIAEAMDKVGKEGVISLEEGKSMQTELEITEGMRFDKGYISPYFATDMERMEASLEEPQILITDKKIALVQDLVPVLEQVARSGKPLLILAEDIEKEALATLVVNRLRGVVNVAAVKAPGFGDRRKAMLEDIAVLTGGQVITEDAGLKLENAKLDMLGKARRITITKDNTTIVAEGNEKEVKARCEQIRRQMDETDSSYDKEKLQERLAKLAGGVAVVKVGAATETEMKDRKLRLEDAINATKAAVEEGIVPGGGTTLAHLAPELETWANENLQSEELTGSLIVSRALLAPLKRIAENAGQNGAVIGERVKEKDFNTGFNAANNEFVDMFEAGIVDPAKVTRSALQNAASIAGMVLTTECIVVDKPEPKENAPAGAGMGGGDFDY.

ATP contacts are provided by residues 29–32 (TLGP), 86–90 (DGTTT), Gly-413, 479–481 (NAA), and Asp-495.

This sequence belongs to the chaperonin (HSP60) family. In terms of assembly, forms a cylinder of 14 subunits composed of two heptameric rings stacked back-to-back. Interacts with the co-chaperonin GroES.

The protein localises to the cytoplasm. The catalysed reaction is ATP + H2O + a folded polypeptide = ADP + phosphate + an unfolded polypeptide.. Its function is as follows. Together with its co-chaperonin GroES, plays an essential role in assisting protein folding. The GroEL-GroES system forms a nano-cage that allows encapsulation of the non-native substrate proteins and provides a physical environment optimized to promote and accelerate protein folding. The sequence is that of Chaperonin GroEL 2 from Trichodesmium erythraeum (strain IMS101).